The following is a 198-amino-acid chain: Glycerol-3-phosphate acyltransferase (198 aa).

5 helical membrane passes run 10–30 (LIPI…WILV), 57–77 (GISF…ILIL), 86–106 (IMYL…WFLF), 118–138 (VVLS…AVVF), and 160–180 (AVTE…IVLI).

It belongs to the PlsY family. In terms of assembly, probably interacts with PlsX.

It is found in the cell inner membrane. It catalyses the reaction an acyl phosphate + sn-glycerol 3-phosphate = a 1-acyl-sn-glycero-3-phosphate + phosphate. Its pathway is lipid metabolism; phospholipid metabolism. In terms of biological role, catalyzes the transfer of an acyl group from acyl-phosphate (acyl-PO(4)) to glycerol-3-phosphate (G3P) to form lysophosphatidic acid (LPA). This enzyme utilizes acyl-phosphate as fatty acyl donor, but not acyl-CoA or acyl-ACP. The chain is Glycerol-3-phosphate acyltransferase from Anaplasma marginale (strain St. Maries).